The primary structure comprises 107 residues: Acetyl-CoA acetyltransferase (107 aa).

The active-site Acyl-thioester intermediate is Cys-88.

Belongs to the thiolase-like superfamily. Thiolase family. In terms of assembly, homotetramer.

The protein localises to the cytoplasm. The enzyme catalyses 2 acetyl-CoA = acetoacetyl-CoA + CoA. Catalyzes the condensation of two molecules of acetyl-CoA to produce acetoacetyl-CoA. The protein is Acetyl-CoA acetyltransferase (thi) of Clostridioides difficile (Peptoclostridium difficile).